Reading from the N-terminus, the 650-residue chain is Probable Xaa-Pro aminopeptidase P (650 aa).

Mn(2+) contacts are provided by aspartate 447, aspartate 458, glutamate 556, and glutamate 570.

The protein belongs to the peptidase M24B family. Mn(2+) serves as cofactor.

The enzyme catalyses Release of any N-terminal amino acid, including proline, that is linked to proline, even from a dipeptide or tripeptide.. In terms of biological role, catalyzes the removal of a penultimate prolyl residue from the N-termini of peptides. The protein is Probable Xaa-Pro aminopeptidase P (AMPP) of Phaeosphaeria nodorum (strain SN15 / ATCC MYA-4574 / FGSC 10173) (Glume blotch fungus).